Here is a 600-residue protein sequence, read N- to C-terminus: NADH-quinone oxidoreductase subunit C/D (600 aa).

An NADH dehydrogenase I subunit C region spans residues 1-190 (MIDLMPKKNT…EPFFLNEQKE (190 aa)). The NADH dehydrogenase I subunit D stretch occupies residues 214 to 600 (EFMFLNLGPN…IDFVMSDVDR (387 aa)).

This sequence in the N-terminal section; belongs to the complex I 30 kDa subunit family. The protein in the C-terminal section; belongs to the complex I 49 kDa subunit family. NDH-1 is composed of 13 different subunits. Subunits NuoB, CD, E, F, and G constitute the peripheral sector of the complex.

The protein localises to the cell inner membrane. The catalysed reaction is a quinone + NADH + 5 H(+)(in) = a quinol + NAD(+) + 4 H(+)(out). Functionally, NDH-1 shuttles electrons from NADH, via FMN and iron-sulfur (Fe-S) centers, to quinones in the respiratory chain. The immediate electron acceptor for the enzyme in this species is believed to be ubiquinone. Couples the redox reaction to proton translocation (for every two electrons transferred, four hydrogen ions are translocated across the cytoplasmic membrane), and thus conserves the redox energy in a proton gradient. This is NADH-quinone oxidoreductase subunit C/D from Buchnera aphidicola subsp. Acyrthosiphon pisum (strain APS) (Acyrthosiphon pisum symbiotic bacterium).